Reading from the N-terminus, the 301-residue chain is Fluoroquinolones export ATP-binding protein Rv2688c (301 aa).

One can recognise an ABC transporter domain in the interval isoleucine 18–tyrosine 246. Glycine 52 to serine 59 contacts ATP.

The protein belongs to the ABC transporter superfamily. In terms of assembly, the complex is composed of 2 ATP-binding proteins (Rv2688c) and 2 transmembrane proteins (Rv2686c and Rv2687c).

Its subcellular location is the cell membrane. Its activity is regulated as follows. Inhibited by reserpine and verapamil. In terms of biological role, part of the ABC transporter complex Rv2686c/Rv2687c/Rv2688c involved in fluoroquinolones export. Confers resistance to ciprofloxacin and, to a lesser extent, norfloxacin, moxifloxacin and sparfloxacin. Probably responsible for energy coupling to the transport system. This is Fluoroquinolones export ATP-binding protein Rv2688c from Mycobacterium tuberculosis (strain ATCC 25618 / H37Rv).